Here is a 238-residue protein sequence, read N- to C-terminus: Protein MIS12 homolog (238 aa).

Residues 117 to 149 (ELDAELDSLRDKLNVVGKRSVELDSELQALERS) are a coiled coil.

The protein belongs to the mis12 family.

It localises to the chromosome. Its subcellular location is the centromere. The protein localises to the kinetochore. In terms of biological role, constitutive component of kinetochores that is essential for proper cell division during mitotic cell cycle. May play a role in the modulation of centromere during meiosis. The polypeptide is Protein MIS12 homolog (Arabidopsis thaliana (Mouse-ear cress)).